The sequence spans 180 residues: dCTP deaminase (180 aa).

DCTP-binding positions include 101 to 106 and aspartate 117; that span reads KSSFAR. Glutamate 127 functions as the Proton donor/acceptor in the catalytic mechanism. DCTP-binding residues include tyrosine 159 and glutamine 168.

Belongs to the dCTP deaminase family. In terms of assembly, homotrimer.

The enzyme catalyses dCTP + H2O + H(+) = dUTP + NH4(+). Its pathway is pyrimidine metabolism; dUMP biosynthesis; dUMP from dCTP (dUTP route): step 1/2. In terms of biological role, catalyzes the deamination of dCTP to dUTP. The chain is dCTP deaminase from Ignicoccus hospitalis (strain KIN4/I / DSM 18386 / JCM 14125).